A 556-amino-acid chain; its full sequence is Dihydroxy-acid dehydratase (556 aa).

Position 47 (C47) interacts with [2Fe-2S] cluster. D79 contacts Mg(2+). C120 provides a ligand contact to [2Fe-2S] cluster. 2 residues coordinate Mg(2+): D121 and K122. K122 carries the post-translational modification N6-carboxylysine. Residue C192 participates in [2Fe-2S] cluster binding. E444 is a binding site for Mg(2+). The active-site Proton acceptor is the S470.

It belongs to the IlvD/Edd family. As to quaternary structure, homodimer. It depends on [2Fe-2S] cluster as a cofactor. The cofactor is Mg(2+).

The enzyme catalyses (2R)-2,3-dihydroxy-3-methylbutanoate = 3-methyl-2-oxobutanoate + H2O. It carries out the reaction (2R,3R)-2,3-dihydroxy-3-methylpentanoate = (S)-3-methyl-2-oxopentanoate + H2O. Its pathway is amino-acid biosynthesis; L-isoleucine biosynthesis; L-isoleucine from 2-oxobutanoate: step 3/4. It functions in the pathway amino-acid biosynthesis; L-valine biosynthesis; L-valine from pyruvate: step 3/4. Its function is as follows. Functions in the biosynthesis of branched-chain amino acids. Catalyzes the dehydration of (2R,3R)-2,3-dihydroxy-3-methylpentanoate (2,3-dihydroxy-3-methylvalerate) into 2-oxo-3-methylpentanoate (2-oxo-3-methylvalerate) and of (2R)-2,3-dihydroxy-3-methylbutanoate (2,3-dihydroxyisovalerate) into 2-oxo-3-methylbutanoate (2-oxoisovalerate), the penultimate precursor to L-isoleucine and L-valine, respectively. The polypeptide is Dihydroxy-acid dehydratase (Prochlorococcus marinus (strain NATL2A)).